Here is a 270-residue protein sequence, read N- to C-terminus: Outer membrane protein P.IIC (270 aa).

Residues 1 to 25 (MQPAKNLLFSSLLFSSLLFSSAARA) form the signal peptide. At 26–35 (ASEDGGRGPY) the chain is on the extracellular side. The beta stranded transmembrane segment at 36–44 (VQADLAYAA) threads the bilayer. Residues 45 to 76 (ERITHDYPKPTGTGKNKISTVSDYFRNIRTHS) are Periplasmic-facing. The chain crosses the membrane as a beta stranded span at residues 77–85 (VHPRVSVGY). Over 86 to 89 (DFGS) the chain is Extracellular. A beta stranded membrane pass occupies residues 90 to 96 (WRIAADY). Residues 97 to 142 (ARYRKWNNNKYSVSIKELLRNDNSASGVRGHLNIQTQKTEHQENGT) are Periplasmic-facing. A beta stranded transmembrane segment spans residues 143–157 (FHAVSSLGLSTIYDF). Residues 158 to 162 (DTGSR) lie on the Extracellular side of the membrane. Residues 163 to 173 (FKPYIGMRVAY) form a beta stranded membrane-spanning segment. Over 174-221 (GHVRHQVRSVEQETEIITTYPSNGGGKVSLSSKMPPKSAHHQSNSIRR) the chain is Periplasmic. Positions 194-217 (PSNGGGKVSLSSKMPPKSAHHQSN) are disordered. A beta stranded transmembrane segment spans residues 222–234 (VGLGVIAGVGFDI). The Extracellular portion of the chain corresponds to 235–237 (TPN). A beta stranded transmembrane segment spans residues 238–246 (LTLDTGYRY). At 247–261 (HNWGRLENTRFKTHE) the chain is on the periplasmic side. The beta stranded transmembrane segment at 262–270 (ASLGMRYRF) threads the bilayer.

The protein belongs to the opacity porin family. In terms of assembly, homotrimer.

The protein localises to the cell outer membrane. This protein serves as a porin. This is Outer membrane protein P.IIC (piiC) from Neisseria gonorrhoeae.